A 124-amino-acid polypeptide reads, in one-letter code: Period circadian protein (124 aa).

The disordered stretch occupies residues 30 to 124; the sequence is TAPVELDPPK…TVTLTESLLN (95 aa). A compositionally biased stretch (low complexity) spans 71–96; the sequence is SGNFTTGSNVRMSSVTNTSNAGTGTS. Residues 97 to 107 are compositionally biased toward gly residues; the sequence is SAGGNGNGGSG.

In terms of assembly, forms a heterodimer with timeless (TIM); the complex then translocates into the nucleus. Post-translationally, phosphorylated with a circadian rhythmicity, probably by the double-time protein (dbt). Phosphorylation could be implicated in the stability of per monomer and in the formation of heterodimer per-tim.

The protein localises to the nucleus. The protein resides in the cytoplasm. Its subcellular location is the perinuclear region. Essential for biological clock functions. Determines the period length of circadian and ultradian rhythms; an increase in PER dosage leads to shortened circadian rhythms and a decrease leads to lengthened circadian rhythms. Essential for the circadian rhythmicity of locomotor activity, eclosion behavior, and for the rhythmic component of the male courtship song that originates in the thoracic nervous system. The biological cycle depends on the rhythmic formation and nuclear localization of the TIM-PER complex. Light induces the degradation of TIM, which promotes elimination of PER. Nuclear activity of the heterodimer coordinatively regulates PER and TIM transcription through a negative feedback loop. Behaves as a negative element in circadian transcriptional loop. Does not appear to bind DNA, suggesting indirect transcriptional inhibition. In Hirtodrosophila pictiventris (Fruit fly), this protein is Period circadian protein (per).